The chain runs to 400 residues: Probable cysteine protease atg4 (400 aa).

C131 (nucleophile) is an active-site residue. Residues D305 and H307 contribute to the active site.

Belongs to the peptidase C54 family.

The protein resides in the cytoplasm. It localises to the nucleus. Its subcellular location is the preautophagosomal structure. The enzyme catalyses [protein]-C-terminal L-amino acid-glycyl-phosphatidylethanolamide + H2O = [protein]-C-terminal L-amino acid-glycine + a 1,2-diacyl-sn-glycero-3-phosphoethanolamine. In terms of biological role, cysteine protease that plays a key role in cytoplasm to vacuole transport (Cvt) and autophagy by mediating both proteolytic activation and delipidation of ATG8. Required for selective autophagic degradation of the nucleus (nucleophagy) as well as for mitophagy which contributes to regulate mitochondrial quantity and quality by eliminating the mitochondria to a basal level to fulfill cellular energy requirements and preventing excess ROS production. The protease activity is required for proteolytic activation of ATG8: cleaves the C-terminal amino acid of ATG8 to reveal a C-terminal glycine. ATG8 ubiquitin-like activity requires the exposure of the glycine at the C-terminus for its conjugation to phosphatidylethanolamine (PE) and its insertion to membranes, which is necessary for autophagy. The ATG8-PE conjugate mediates tethering between adjacent membranes and stimulates membrane hemifusion, leading to expansion of the autophagosomal membrane during autophagy. In addition to the protease activity, also catalyzes deconjugation of PE-conjugated forms of ATG8 during macroautophagy: ATG8 delipidation is required to release the protein from membranes, which facilitates multiple events during macroautophagy, and especially for efficient autophagosome biogenesis, the assembly of ATG9-containing tubulovesicular clusters into phagophores/autophagosomes, and for the disassembly of PAS-associated ATG components. ATG8 delipidation by ATG4 also recycles ATG8-PE generated on inappropriate membranes to maintain a reservoir of unlipidated ATG8 that is required for autophagosome formation at the PAS. This is Probable cysteine protease atg4 (atg4) from Aspergillus clavatus (strain ATCC 1007 / CBS 513.65 / DSM 816 / NCTC 3887 / NRRL 1 / QM 1276 / 107).